A 340-amino-acid chain; its full sequence is Cytoskeleton protein RodZ (340 aa).

Topologically, residues 1–111 are cytoplasmic; it reads MNTEATQEKS…LGKQRKKRDG (111 aa). Residues 19–79 enclose the HTH cro/C1-type domain; that stretch reads LRTAREQMGL…RLVHVPEEEL (61 aa). The H-T-H motif DNA-binding region spans 30–49; that stretch reads QQNVAERLCLKLSTIRDIEE. A helical; Signal-anchor for type II membrane protein transmembrane segment spans residues 112-132; that stretch reads WLMIFTWLVLFVVLGLTGAWW. The Periplasmic segment spans residues 133-340; it reads WQNHKAAQDD…QVARLTVGAP (208 aa). Positions 162-252 are disordered; it reads ALSDDNANGG…AAPLPTGSAA (91 aa). A compositionally biased stretch (polar residues) spans 183–201; it reads ATANNAPSSVTATSDNGTP. A compositionally biased stretch (low complexity) spans 202–233; the sequence is AATAQSSQVTASNAAPAANAVNDNTPPVAVAP.

It belongs to the RodZ family.

It is found in the cell inner membrane. Cytoskeletal protein that is involved in cell-shape control through regulation of the length of the long axis. This chain is Cytoskeleton protein RodZ, found in Erwinia tasmaniensis (strain DSM 17950 / CFBP 7177 / CIP 109463 / NCPPB 4357 / Et1/99).